Here is a 94-residue protein sequence, read N- to C-terminus: Small ribosomal subunit protein bS18 (94 aa).

The protein belongs to the bacterial ribosomal protein bS18 family. In terms of assembly, part of the 30S ribosomal subunit. Forms a tight heterodimer with protein bS6.

Its function is as follows. Binds as a heterodimer with protein bS6 to the central domain of the 16S rRNA, where it helps stabilize the platform of the 30S subunit. In Albidiferax ferrireducens (strain ATCC BAA-621 / DSM 15236 / T118) (Rhodoferax ferrireducens), this protein is Small ribosomal subunit protein bS18.